Consider the following 666-residue polypeptide: tRNA 5-methylaminomethyl-2-thiouridine biosynthesis bifunctional protein MnmC (666 aa).

The tract at residues 1–253 (MSSPFVPIIT…KRHMICAHYE (253 aa)) is tRNA (mnm(5)s(2)U34)-methyltransferase. Residues 283–666 (VGGGLAGCFI…FLRKKIIQGP (384 aa)) form an FAD-dependent cmnm(5)s(2)U34 oxidoreductase region.

This sequence in the N-terminal section; belongs to the methyltransferase superfamily. tRNA (mnm(5)s(2)U34)-methyltransferase family. In the C-terminal section; belongs to the DAO family. The cofactor is FAD.

It localises to the cytoplasm. The catalysed reaction is 5-aminomethyl-2-thiouridine(34) in tRNA + S-adenosyl-L-methionine = 5-methylaminomethyl-2-thiouridine(34) in tRNA + S-adenosyl-L-homocysteine + H(+). Its function is as follows. Catalyzes the last two steps in the biosynthesis of 5-methylaminomethyl-2-thiouridine (mnm(5)s(2)U) at the wobble position (U34) in tRNA. Catalyzes the FAD-dependent demodification of cmnm(5)s(2)U34 to nm(5)s(2)U34, followed by the transfer of a methyl group from S-adenosyl-L-methionine to nm(5)s(2)U34, to form mnm(5)s(2)U34. This is tRNA 5-methylaminomethyl-2-thiouridine biosynthesis bifunctional protein MnmC from Legionella pneumophila (strain Lens).